The following is a 118-amino-acid chain: Ribonuclease P protein component (118 aa).

This sequence belongs to the RnpA family. As to quaternary structure, consists of a catalytic RNA component (M1 or rnpB) and a protein subunit.

The enzyme catalyses Endonucleolytic cleavage of RNA, removing 5'-extranucleotides from tRNA precursor.. Functionally, RNaseP catalyzes the removal of the 5'-leader sequence from pre-tRNA to produce the mature 5'-terminus. It can also cleave other RNA substrates such as 4.5S RNA. The protein component plays an auxiliary but essential role in vivo by binding to the 5'-leader sequence and broadening the substrate specificity of the ribozyme. This is Ribonuclease P protein component from Vibrio campbellii (strain ATCC BAA-1116).